Consider the following 425-residue polypeptide: Apolipoprotein N-acyltransferase (425 aa).

The next 6 membrane-spanning stretches (helical) occupy residues 12–32 (LLACMFVSSVYVNAVLDAYAI), 34–54 (NPYISITLTSLLAPLSMLAFL), 60–80 (SAFALGFFVGALLFYWCALSF), 88–108 (LLPLIIVLIALVYGVLFYLLL), 120–140 (FLGSSFIHPFGFDWLVPDSFF), and 142–162 (YSVFRVDKLSLGLVFLACIFL). The CN hydrolase domain maps to 201–425 (VSTKTPQDLK…LGDILFRKRS (225 aa)). Residue Glu-242 is the Proton acceptor of the active site. Lys-296 is a catalytic residue. Cys-349 acts as the Nucleophile in catalysis.

This sequence belongs to the CN hydrolase family. Apolipoprotein N-acyltransferase subfamily.

Its subcellular location is the cell inner membrane. It carries out the reaction N-terminal S-1,2-diacyl-sn-glyceryl-L-cysteinyl-[lipoprotein] + a glycerophospholipid = N-acyl-S-1,2-diacyl-sn-glyceryl-L-cysteinyl-[lipoprotein] + a 2-acyl-sn-glycero-3-phospholipid + H(+). The protein operates within protein modification; lipoprotein biosynthesis (N-acyl transfer). In terms of biological role, catalyzes the phospholipid dependent N-acylation of the N-terminal cysteine of apolipoprotein, the last step in lipoprotein maturation. This Helicobacter pylori (strain ATCC 700392 / 26695) (Campylobacter pylori) protein is Apolipoprotein N-acyltransferase.